Here is a 715-residue protein sequence, read N- to C-terminus: ATP-dependent zinc metalloprotease FtsH (715 aa).

The Cytoplasmic segment spans residues 1-10 (MKNKNRGFFR). The chain crosses the membrane as a helical span at residues 11–31 (SSLSYAFVILAVIFLIYSFFG). Residues 32–137 (RSDGSVKHLS…KPAASNFWGS (106 aa)) lie on the Extracellular side of the membrane. A helical membrane pass occupies residues 138–158 (MLTLILPTLIMFALLYWMLIG). Topologically, residues 159-715 (SQRGQGGSGG…LLDAVNNKFD (557 aa)) are cytoplasmic. Residues 167–187 (GGPGGIMSFGRSKAKPADPKQ) are disordered. 233–240 (GPPGTGKT) provides a ligand contact to ATP. H455 lines the Zn(2+) pocket. E456 is an active-site residue. Positions 459 and 531 each coordinate Zn(2+).

It in the central section; belongs to the AAA ATPase family. This sequence in the C-terminal section; belongs to the peptidase M41 family. In terms of assembly, homohexamer. It depends on Zn(2+) as a cofactor.

It is found in the cell membrane. In terms of biological role, acts as a processive, ATP-dependent zinc metallopeptidase for both cytoplasmic and membrane proteins. Plays a role in the quality control of integral membrane proteins. Can complement an E.coli ftsH disruption mutant. This is ATP-dependent zinc metalloprotease FtsH from Oenococcus oeni (Leuconostoc oenos).